Reading from the N-terminus, the 367-residue chain is Choline-phosphate cytidylyltransferase A (367 aa).

Residue M1 is modified to N-acetylmethionine. The tract at residues 1–31 (MDAQSSAKVNSRKRRKEVPGPNGATEEDGIP) is disordered. K8 bears the N6-acetyllysine mark. The CTP site is built by I84, F85, H92, and K122. Phosphocholine is bound by residues K122 and W151. CTP contacts are provided by H168, D169, Y173, Q195, R196, T197, and I200. 2 amphipathic regions span residues 228 to 287 (KELN…EFIG) and 298 to 315 (ALKH…QAIS). At S233 the chain carries Phosphoserine. An autoinhibitory (AI) region spans residues 272–293 (IDLIQKWEEKSREFIGSFLEMF). The interval 313-367 (AISPKQSPSSSPTHERSPSPSFRWPFSGKTSPSSSPASLSRCKAVTCDISEDEED) is disordered. At S315 the chain carries Phosphoserine; by PKC. Positions 315–324 (SPKQSPSSSP) are enriched in polar residues. 4 positions are modified to phosphoserine: S319, S321, S322, and S323. Copy 1 of the repeat occupies 319-324 (SPSSSP). A 3 X repeats region spans residues 319–348 (SPSSSPTHERSPSPSFRWPFSGKTSPSSSP). At T325 the chain carries Phosphothreonine. S329 and S331 each carry phosphoserine. One copy of the 2; approximate repeat lies at 329–333 (SPSPS). A compositionally biased stretch (low complexity) spans 330–352 (PSPSFRWPFSGKTSPSSSPASLS). S333 is subject to Phosphoserine; by PKC. At T342 the chain carries Phosphothreonine. Residues S343, S345, S346, S347, S350, and S352 each carry the phosphoserine modification. Residues 343-348 (SPSSSP) form repeat 3. T358 bears the Phosphothreonine mark. S362 carries the post-translational modification Phosphoserine; by CK2.

This sequence belongs to the cytidylyltransferase family. In terms of assembly, homodimer. In terms of processing, the serine residues of the C-terminus are phosphorylated. The inactive soluble form is stabilized by phosphorylation, the active membrane bound form is promoted by anionic lipids or diacylglycerol, and is stabilized by dephosphorylation. Post-translationally, the N-terminus is blocked. Monoubiquitinated by the SCF(FBXL2) complex, leading to proteasomal degradation.

The protein resides in the cytoplasm. Its subcellular location is the cytosol. It localises to the membrane. The protein localises to the endoplasmic reticulum membrane. It is found in the nucleus. It catalyses the reaction phosphocholine + CTP + H(+) = CDP-choline + diphosphate. The protein operates within phospholipid metabolism; phosphatidylcholine biosynthesis; phosphatidylcholine from phosphocholine: step 1/2. With respect to regulation, interconverts between an inactive cytosolic form and an active membrane-bound form. Activation involves disruption of an inhibitory interaction between helices at the base of the active site and the autoinhibitory (AI) region. Activated by N-methylethanolamine. Activated by oleic acid-containing phosphatidylcholine vesicles. In terms of biological role, catalyzes the key rate-limiting step in the CDP-choline pathway for phosphatidylcholine biosynthesis. The sequence is that of Choline-phosphate cytidylyltransferase A (Pcyt1a) from Rattus norvegicus (Rat).